Consider the following 448-residue polypeptide: 5-hydroxytryptamine receptor 7 (448 aa).

The Extracellular portion of the chain corresponds to 1-86; the sequence is MMDVNSSGRP…INYGRVEKVV (86 aa). N-linked (GlcNAc...) asparagine glycosylation is found at Asn5 and Asn69. A helical transmembrane segment spans residues 87–111; sequence IGSILTLITLLTIAGNCLVVISVCF. Over 112–121 the chain is Cytoplasmic; it reads VKKLRQPSNY. Residues 122-143 traverse the membrane as a helical segment; the sequence is LIVSLALADLSVAVAVMPFVSV. Topologically, residues 144–155 are extracellular; sequence TDLIGGKWIFGH. Residues 156–181 form a helical membrane-spanning segment; the sequence is FFCNVFIAMDVMCCTASIMTLCVISI. Cys158 and Cys234 are joined by a disulfide. Asp165 lines the serotonin pocket. At 182–201 the chain is on the cytoplasmic side; the sequence is DRYLGITRPLTYPVRQNGKC. The chain crosses the membrane as a helical span at residues 202 to 222; the sequence is MAKMILSVWLLSASITLPPLF. Topologically, residues 223 to 240 are extracellular; the sequence is GWAQNVNDDKVCLISQDF. A helical transmembrane segment spans residues 241–263; that stretch reads GYTIYSTAVAFYIPMSVMLFMYY. The Cytoplasmic segment spans residues 264–329; sequence QIYKAARKSA…SIFKREQKAA (66 aa). The helical transmembrane segment at 330-355 threads the bilayer; sequence TTLGIIVGAFTVCWLPFFLLSTARPF. Residues 356–366 are Extracellular-facing; sequence ICGTSCSCIPL. Residues 367 to 390 form a helical membrane-spanning segment; that stretch reads WVERTCLWLGYANSLINPFIYAFF. Residues 391 to 448 are Cytoplasmic-facing; that stretch reads NRDLRTTYRSLLQCQYRNINRKLSAAGMHEALKLAERPERSEFVLQNSDHCGKKGHDT. Cys404 carries the S-palmitoyl cysteine lipid modification.

Belongs to the G-protein coupled receptor 1 family. Thalamus, hypothalamus, and the hippocampal rudiments.

It is found in the cell membrane. Its function is as follows. G-protein coupled receptor for 5-hydroxytryptamine (serotonin), a biogenic hormone that functions as a neurotransmitter, a hormone and a mitogen. Ligand binding causes a conformation change that triggers signaling via guanine nucleotide-binding proteins (G proteins) and modulates the activity of downstream effectors. HTR7 is coupled to G(s) G alpha proteins and mediates activation of adenylate cyclase activity. The polypeptide is 5-hydroxytryptamine receptor 7 (Rattus norvegicus (Rat)).